A 160-amino-acid chain; its full sequence is Putative 4-hydroxy-4-methyl-2-oxoglutarate aldolase (160 aa).

Substrate is bound by residues 76 to 79 and R98; that span reads GDMI. D99 contacts a divalent metal cation.

Belongs to the class II aldolase/RraA-like family. As to quaternary structure, homotrimer. A divalent metal cation is required as a cofactor.

It catalyses the reaction 4-hydroxy-4-methyl-2-oxoglutarate = 2 pyruvate. The enzyme catalyses oxaloacetate + H(+) = pyruvate + CO2. Functionally, catalyzes the aldol cleavage of 4-hydroxy-4-methyl-2-oxoglutarate (HMG) into 2 molecules of pyruvate. Also contains a secondary oxaloacetate (OAA) decarboxylase activity due to the common pyruvate enolate transition state formed following C-C bond cleavage in the retro-aldol and decarboxylation reactions. This chain is Putative 4-hydroxy-4-methyl-2-oxoglutarate aldolase, found in Alcanivorax borkumensis (strain ATCC 700651 / DSM 11573 / NCIMB 13689 / SK2).